Here is a 548-residue protein sequence, read N- to C-terminus: Probable malate:quinone oxidoreductase (548 aa).

A disordered region spans residues 521 to 548 (DKPQAADSTPKPQLKPQPVQKEVADIAL). Low complexity predominate over residues 530-541 (PKPQLKPQPVQK).

It belongs to the MQO family. FAD is required as a cofactor.

It catalyses the reaction (S)-malate + a quinone = a quinol + oxaloacetate. The protein operates within carbohydrate metabolism; tricarboxylic acid cycle; oxaloacetate from (S)-malate (quinone route): step 1/1. This Escherichia coli O17:K52:H18 (strain UMN026 / ExPEC) protein is Probable malate:quinone oxidoreductase.